Here is a 2753-residue protein sequence, read N- to C-terminus: Maltase-glucoamylase (2753 aa).

The Cytoplasmic segment spans residues M1–E13. A helical; Signal-anchor for type II membrane protein transmembrane segment spans residues I14 to L34. The Lumenal portion of the chain corresponds to A35–L2753. Positions S41–S87 are disordered. Positions P44–P85 are enriched in low complexity. Residues A88–K134 enclose the P-type 1 domain. Disulfide bonds link C90–C118, C101–C117, and C112–C130. N135 carries N-linked (GlcNAc...) asparagine glycosylation. Residue D289 coordinates acarbose. The N-linked (GlcNAc...) asparagine glycan is linked to N295. The interval P356–V737 is maltase. Residue D413 coordinates acarbose. Sulfotyrosine occurs at positions 416 and 425. N-linked (GlcNAc...) asparagine glycosylation is found at N457, N458, and N479. The active-site Nucleophile is the D529. E532 is a catalytic residue. R612 and D628 together coordinate acarbose. C659 and C670 are joined by a disulfide. H686 contributes to the acarbose binding site. N707, N749, N827, N885, N912, N977, N989, and N1255 each carry an N-linked (GlcNAc...) asparagine glycan. One can recognise a P-type 2 domain in the interval W954–N1000. 2 disulfide bridges follow: C966–C983 and C978–C996. The interval T1221 to T1632 is glucoamylase. A Sulfotyrosine modification is found at Y1282. N-linked (GlcNAc...) asparagine glycosylation is found at N1323, N1364, and N1388. D1420 serves as the catalytic Nucleophile. E1423 is a catalytic residue. The Proton donor role is filled by D1526. The P-type 3 domain occupies W1850 to N1896. Cystine bridges form between C1862–C1879 and C1874–C1892. N-linked (GlcNAc...) asparagine glycans are attached at residues N2499, N2568, N2738, and N2743.

The protein belongs to the glycosyl hydrolase 31 family. As to quaternary structure, monomer. N- and O-glycosylated. In terms of processing, does not undergo intracellular or extracellular proteolytic cleavage. Post-translationally, sulfated. In terms of tissue distribution, broadly expressed. Highly expressed in small intestine. Expressed in granulocytes.

It localises to the apical cell membrane. The catalysed reaction is Hydrolysis of terminal, non-reducing (1-&gt;4)-linked alpha-D-glucose residues with release of alpha-D-glucose.. The enzyme catalyses D-maltoheptaose + H2O = D-maltohexaose + alpha-D-glucose. It carries out the reaction D-maltohexaose + H2O = D-maltopentaose + alpha-D-glucose. It catalyses the reaction D-maltopentaose + H2O = D-maltotetraose + alpha-D-glucose. The catalysed reaction is D-maltotetraose + H2O = D-maltotriose + alpha-D-glucose. The enzyme catalyses D-maltotriose + H2O = D-maltose + alpha-D-glucose. It carries out the reaction D-maltose + H2O = alpha-D-glucose + D-glucose. It catalyses the reaction nigerose + H2O = alpha-D-glucose + D-glucose. The catalysed reaction is kojibiose + H2O = alpha-D-glucose + D-glucose. The enzyme catalyses isomaltose + H2O = alpha-D-glucose + D-glucose. It carries out the reaction 6-O-alpha-D-glucopyranosyl-D-fructose + H2O = alpha-D-glucose + D-fructose. It functions in the pathway carbohydrate degradation. With respect to regulation, down-regulated at high oligomaltose concentration as it occurs during the mealtime. Down-regulated by anti-diabetic drug acarbose. Functionally, alpha-(1,4) exo-glucosidase involved in breakdown of dietary starch oligosaccharides in small intestine. Cleaves the non-reducing alpha-(1,4)-linked glucose residue in linear dextrins with retention of anomeric center stereochemistry. Mainly hydrolyzes short length oligomaltoses having two to seven glucose residues. Can cleave alpha-(1,2), alpha-(1,3) and alpha-(1,6) glycosidic linkages with lower efficiency, whereas beta glycosidic linkages are usually not hydrolyzed. In Homo sapiens (Human), this protein is Maltase-glucoamylase.